The sequence spans 166 residues: HTH-type transcriptional regulator rot (166 aa).

Positions 87-110 form a DNA-binding region, H-T-H motif; that stretch reads LKEMDRFVEVKPYKRTRTYNNLVE.

It belongs to the rot family.

Global regulator with both positive and negative effects that mediates modulation of several genes involved in virulence. Also, modulates the expression of genes not previously implicated in pathogenesis. The sequence is that of HTH-type transcriptional regulator rot (rot) from Staphylococcus aureus (strain MRSA252).